A 454-amino-acid polypeptide reads, in one-letter code: C4-dicarboxylate transport protein (454 aa).

The next 9 membrane-spanning stretches (helical) occupy residues 33-53, 66-86, 101-121, 148-168, 170-190, 210-230, 243-263, 354-374, and 377-397; these read VQVL…PDIG, LVKM…IAGM, IYFL…ANLV, EQSI…GAFA, GDIL…AIVG, LVAI…AFTI, MLIG…LGAV, LLLV…AGFI, and AATL…ILGI.

The protein belongs to the dicarboxylate/amino acid:cation symporter (DAACS) (TC 2.A.23) family.

It is found in the cell inner membrane. Responsible for the transport of dicarboxylates such as succinate, fumarate, and malate from the periplasm across the membrane. The polypeptide is C4-dicarboxylate transport protein (Sinorhizobium medicae (strain WSM419) (Ensifer medicae)).